We begin with the raw amino-acid sequence, 218 residues long: Pyridoxine/pyridoxamine 5'-phosphate oxidase (218 aa).

Substrate is bound by residues 12 to 15 and Arg70; that span reads RLSY. FMN contacts are provided by residues 65–70, 80–81, Lys87, and Gln109; these read RTVLLR and YT. Substrate contacts are provided by Tyr127, Arg131, and Ser135. FMN-binding positions include 145–146 and Trp191; that span reads QS. 197-199 contributes to the substrate binding site; that stretch reads RLH. Position 201 (Arg201) interacts with FMN.

It belongs to the pyridoxamine 5'-phosphate oxidase family. In terms of assembly, homodimer. The cofactor is FMN.

The enzyme catalyses pyridoxamine 5'-phosphate + O2 + H2O = pyridoxal 5'-phosphate + H2O2 + NH4(+). It carries out the reaction pyridoxine 5'-phosphate + O2 = pyridoxal 5'-phosphate + H2O2. It functions in the pathway cofactor metabolism; pyridoxal 5'-phosphate salvage; pyridoxal 5'-phosphate from pyridoxamine 5'-phosphate: step 1/1. The protein operates within cofactor metabolism; pyridoxal 5'-phosphate salvage; pyridoxal 5'-phosphate from pyridoxine 5'-phosphate: step 1/1. Its function is as follows. Catalyzes the oxidation of either pyridoxine 5'-phosphate (PNP) or pyridoxamine 5'-phosphate (PMP) into pyridoxal 5'-phosphate (PLP). This chain is Pyridoxine/pyridoxamine 5'-phosphate oxidase, found in Acinetobacter baumannii (strain SDF).